A 430-amino-acid polypeptide reads, in one-letter code: Peptidoglycan DD-endopeptidase ShyA (430 aa).

An N-terminal signal peptide occupies residues 1–35 (MISKSIILRFSELSMRKKATLVGLPLLAVAAISSS). Zn(2+)-binding residues include H297, D301, and H378.

Belongs to the peptidase M23B family. It depends on Zn(2+) as a cofactor.

The protein resides in the periplasm. It participates in cell wall degradation; peptidoglycan degradation. Its activity is regulated as follows. Reduced activity in 0.5 mM EDTA and a complete loss of activity at higher EDTA concentrations. The effect of EDTA can be reversed by addition of 1 mM ZnCl(2). Conformational switching between open (catalytically active) and closed (catalytically inactive) conformation of this protein is suggested mechanism of its regulation. The signal or inducer of the conformational shift to the open form unmasking the active site is currently not understood. Its function is as follows. Cell wall peptidoglycan (PG) DD-endopeptidase essential for cell growth and elongation. Hydrolyzes peptide cross-links which covalently connect adjacent PG strands probably to allow insertion of new glycans and thus cell wall expansion. Degrades purified whole PG sacculi in vitro. Releases predominantly short glycan chains from the PG. Cleaves D,D cross-linked muropeptides specifically preferring dimeric tetrapeptide-tetrapeptide (D44) substrates and has only little activity on dimeric tetrapeptide-pentapeptide (D45) substrates. Also converts more than 50% of tetrapeptide-tripeptide (D43) to product as well as more than 50% of D43M, which contains D-Met instead of D-Ala in the fourth position of the acceptor moiety. Cleaves the D,D bond between diaminopimelic acid (DAP) and D-Ala of the PG substrate in vitro. No cleavage of L,D bond connecting two DAP moieties. This chain is Peptidoglycan DD-endopeptidase ShyA, found in Vibrio cholerae serotype O1 (strain ATCC 39315 / El Tor Inaba N16961).